The chain runs to 609 residues: Chloride channel CLIC-like protein 1 (609 aa).

The first 25 residues, 1–25 (MKLSSSSSFGLCILVVFFCFVVIES), serve as a signal peptide directing secretion. Helical transmembrane passes span 212–235 (VSLI…SWFV), 241–260 (FAVS…YMLA), and 358–380 (VTLQ…YGSA). The segment at 398-553 (EQPPPAVGQR…PSSIDVKTVG (156 aa)) is disordered. Composition is skewed to basic and acidic residues over residues 454-474 (ENRE…KRTP) and 507-537 (EEVK…DRSE). Residues 538–547 (PITSEPPSSI) show a composition bias toward low complexity.

It belongs to the chloride channel MCLC family. As to expression, expressed in the hindbrain, swim bladder and the eye at 1 day post fertilization (dpf) with increased expression at 3 dpf. At 3 dpf, most prominent expression in the retina, with strong expression in the ganglion cell layer, outer nuclear layer and the retinal pigmented epithelium.

Its subcellular location is the endoplasmic reticulum membrane. The protein localises to the golgi apparatus membrane. The protein resides in the nucleus membrane. In terms of biological role, seems to act as a chloride ion channel. Plays a role in retina development. In Danio rerio (Zebrafish), this protein is Chloride channel CLIC-like protein 1.